The sequence spans 597 residues: Elongation factor 4 (597 aa).

Positions 2–184 (DHIRNFSIIA…ALIAKVPPPK (183 aa)) constitute a tr-type G domain. GTP is bound by residues 14–19 (DHGKST) and 131–134 (NKID).

The protein belongs to the TRAFAC class translation factor GTPase superfamily. Classic translation factor GTPase family. LepA subfamily.

Its subcellular location is the cell inner membrane. The enzyme catalyses GTP + H2O = GDP + phosphate + H(+). In terms of biological role, required for accurate and efficient protein synthesis under certain stress conditions. May act as a fidelity factor of the translation reaction, by catalyzing a one-codon backward translocation of tRNAs on improperly translocated ribosomes. Back-translocation proceeds from a post-translocation (POST) complex to a pre-translocation (PRE) complex, thus giving elongation factor G a second chance to translocate the tRNAs correctly. Binds to ribosomes in a GTP-dependent manner. In Cupriavidus taiwanensis (strain DSM 17343 / BCRC 17206 / CCUG 44338 / CIP 107171 / LMG 19424 / R1) (Ralstonia taiwanensis (strain LMG 19424)), this protein is Elongation factor 4.